The following is a 152-amino-acid chain: Prostaglandin E synthase (152 aa).

At 1-12 (MPAHSLAMSSPA) the chain is on the lumenal side. A helical membrane pass occupies residues 13–41 (LPAFLLCSTLLVIKMYVVAIITGQVRLRK). Arginine 38 contacts glutathione. Topologically, residues 42–60 (KAFANPEDALRHGGPQYCR) are cytoplasmic. Residues 61–90 (SDPDVERCLRAHRNDMETIYPFLFLGFVYS) traverse the membrane as a helical segment. 73–77 (RNDME) lines the glutathione pocket. The Lumenal segment spans residues 91–95 (FLGPN). A helical transmembrane segment spans residues 96 to 119 (PFVAWMHFLVFLLGRVVHTVAYLG). Glutathione-binding residues include histidine 113 and tyrosine 117. Topologically, residues 120 to 123 (KLRA) are cytoplasmic. The helical transmembrane segment at 124–152 (PIRSVTYTLAQLPCASMALQILWEAARHL) threads the bilayer. Position 126 to 130 (126 to 130 (RSVTY)) interacts with glutathione.

Belongs to the MAPEG family. Homotrimer. Glutathione is required as a cofactor.

Its subcellular location is the membrane. The protein localises to the cytoplasm. It localises to the perinuclear region. The catalysed reaction is prostaglandin H2 = prostaglandin E2. It catalyses the reaction 2-glyceryl-prostaglandin H2 = 2-glyceryl-prostaglandin E2. The enzyme catalyses prostaglandin G2 = (15S)-15-hydroperoxy-prostaglandin E2. It carries out the reaction 1-chloro-2,4-dinitrobenzene + glutathione = 2,4-dinitrophenyl-S-glutathione + chloride + H(+). The catalysed reaction is (5S)-hydroperoxy-(6E,8Z,11Z,14Z)-eicosatetraenoate + 2 glutathione = (5S)-hydroxy-(6E,8Z,11Z,14Z)-eicosatetraenoate + glutathione disulfide + H2O. It participates in lipid metabolism; prostaglandin biosynthesis. In terms of biological role, terminal enzyme of the cyclooxygenase (COX)-2-mediated prostaglandin E2 (PGE2) biosynthetic pathway. Catalyzes the glutathione-dependent oxidoreduction of prostaglandin endoperoxide H2 (PGH2) to prostaglandin E2 (PGE2) in response to inflammatory stimuli. Plays a key role in inflammation response, fever and pain. Also catalyzes the oxidoreduction of endocannabinoids into prostaglandin glycerol esters and PGG2 into 15-hydroperoxy-PGE2. In addition, displays low glutathione transferase and glutathione-dependent peroxidase activities, toward 1-chloro-2,4-dinitrobenzene and 5-hydroperoxyicosatetraenoic acid (5-HPETE), respectively. The chain is Prostaglandin E synthase (PTGES) from Macaca fascicularis (Crab-eating macaque).